Consider the following 207-residue polypeptide: Probable GTP-binding protein EngB (207 aa).

The 175-residue stretch at 23 to 197 (AGIEVVFAGR…ETVIGRWLFA (175 aa)) folds into the EngB-type G domain. GTP-binding positions include 31–38 (GRSNAGKS), 58–62 (GRTQL), 76–79 (DLPG), 143–146 (TKAD), and 176–178 (FSS). Mg(2+)-binding residues include Ser-38 and Thr-60.

This sequence belongs to the TRAFAC class TrmE-Era-EngA-EngB-Septin-like GTPase superfamily. EngB GTPase family. The cofactor is Mg(2+).

Its function is as follows. Necessary for normal cell division and for the maintenance of normal septation. This is Probable GTP-binding protein EngB from Methylobacillus flagellatus (strain ATCC 51484 / DSM 6875 / VKM B-1610 / KT).